Reading from the N-terminus, the 237-residue chain is Class B acid phosphatase (237 aa).

The N-terminal stretch at Met1 to Ala25 is a signal peptide. Asp69 (nucleophile) is an active-site residue. Asp69 and Asp71 together coordinate Mg(2+). The Proton donor role is filled by Asp71. Substrate is bound by residues Thr137–Gly138 and Lys177. Asp192 contributes to the Mg(2+) binding site.

Belongs to the class B bacterial acid phosphatase family. In terms of assembly, homotetramer. Mg(2+) serves as cofactor.

It is found in the periplasm. The catalysed reaction is a phosphate monoester + H2O = an alcohol + phosphate. Its function is as follows. Dephosphorylates several organic phosphate monoesters. Also has a phosphotransferase activity catalyzing the transfer of low-energy phosphate groups from organic phosphate monoesters to free hydroxyl groups of various organic compounds. This is Class B acid phosphatase from Citrobacter rodentium (strain ICC168) (Citrobacter freundii biotype 4280).